The sequence spans 526 residues: Vang-like protein 2 (526 aa).

The segment at 1 to 95 (MDNESQYSGY…NEDLTRASKE (95 aa)) is disordered. Topologically, residues 1 to 109 (MDNESQYSGY…SPLECRRFAG (109 aa)) are cytoplasmic. Positions 15–33 (SHSRSSRKHRDRRDRHRSK) are enriched in basic residues. 2 stretches are compositionally biased toward basic and acidic residues: residues 34–43 (SRDSSSRGDK) and 58–68 (ESTRGDDRDDN). Residues 70–83 (GETTTVVTGTSEHS) are compositionally biased toward low complexity. Residues 84–95 (VSNEDLTRASKE) are compositionally biased toward basic and acidic residues. A helical transmembrane segment spans residues 110–130 (PIVSGVLGLFALLTPLAFLLL). Over 131–148 (PQLLWRDSLEPCGTPCEG) the chain is Extracellular. Residues 149–169 (LYVSLAFKLLVLLISSWALFL) form a helical membrane-spanning segment. Residues 170 to 178 (RPSRSTLPR) are Cytoplasmic-facing. Residues 179–199 (FFVFRCLLMALVFLFVASYWL) traverse the membrane as a helical segment. Over 200 to 215 (FYGVRVLEPRERDYRG) the chain is Extracellular. A helical membrane pass occupies residues 216 to 236 (IVGYAVSLVDALLFIQYLALV). At 237 to 526 (LLEVRHLRPA…VMRLQSETSV (290 aa)) the chain is on the cytoplasmic side. Positions 523–526 (ETSV) match the PDZ-binding motif.

It belongs to the Vang family. In terms of assembly, interacts with the PDZ domain of dvl2/dsh. In terms of tissue distribution, ubiquitously expressed at the 4-cell stage. In early somitogenesis, becomes more abundant in anterior neural tissue where expression is seen in the neural tube but not in the notochord.

It is found in the cell membrane. Plays a role in non-canonical Wnt/planar cell polarity (PCP) signaling to regulate convergent extension cell movements during gastrulation. Acts together with scrib and prickle1 and localizes prickle1 and dvl2/dsh to the plasma membrane. Has an overlapping role with kny during both convergent extension and eye development. In the eye, involved in establishing proper alignment of the anterior neural plate and midline cells expressing shha and shhb/twhh. Has indirect effects on a number of other developmental processes including notochord shape formation, neural progenitor cell morphogenesis, segregation of somites and adaxial cell development. Together with prickle1, required for the posterior (caudal) movement of branchiomotor neurons in the hindbrain independently of, and a few hours after, convergent extension. May be required for cell surface localization of fzd3 and fzd6 in the inner ear. The sequence is that of Vang-like protein 2 from Danio rerio (Zebrafish).